Here is a 458-residue protein sequence, read N- to C-terminus: Adenylosuccinate synthetase (458 aa).

GTP-binding positions include 17–23 (GDEGKGK) and 45–47 (GHT). The active-site Proton acceptor is the D18. Residues D18 and G45 each coordinate Mg(2+). Residues 18-21 (DEGK), 43-46 (NAGH), T137, R151, Q247, T262, and R330 each bind IMP. H46 functions as the Proton donor in the catalytic mechanism. 326–332 (VTTGRSR) is a binding site for substrate. GTP-binding positions include R332, 358–360 (KLD), and 440–442 (STS).

It belongs to the adenylosuccinate synthetase family. As to quaternary structure, homodimer. The cofactor is Mg(2+).

It localises to the cytoplasm. The catalysed reaction is IMP + L-aspartate + GTP = N(6)-(1,2-dicarboxyethyl)-AMP + GDP + phosphate + 2 H(+). It functions in the pathway purine metabolism; AMP biosynthesis via de novo pathway; AMP from IMP: step 1/2. Functionally, plays an important role in the de novo pathway of purine nucleotide biosynthesis. Catalyzes the first committed step in the biosynthesis of AMP from IMP. The polypeptide is Adenylosuccinate synthetase (Delftia acidovorans (strain DSM 14801 / SPH-1)).